Here is a 547-residue protein sequence, read N- to C-terminus: Inactive delta-guaiene synthase (547 aa).

3 residues coordinate Mg(2+): Asp-299, Asp-303, and Asp-444. The DDXXD motif signature appears at 299–303; sequence DDTYD.

This sequence belongs to the terpene synthase family. Mg(2+) serves as cofactor.

This Aquilaria crassna (Eagle wood) protein is Inactive delta-guaiene synthase (C1).